The following is a 133-amino-acid chain: Small ribosomal subunit protein uS11 (133 aa).

The segment at 1 to 23 (MPPKTRGAVRKPRKKDKKNIALG) is disordered. Residues 7–17 (GAVRKPRKKDK) show a composition bias toward basic residues.

It belongs to the universal ribosomal protein uS11 family. In terms of assembly, part of the 30S ribosomal subunit. Interacts with proteins S7 and S18. Binds to IF-3.

Its function is as follows. Located on the platform of the 30S subunit, it bridges several disparate RNA helices of the 16S rRNA. Forms part of the Shine-Dalgarno cleft in the 70S ribosome. The polypeptide is Small ribosomal subunit protein uS11 (Pseudarthrobacter chlorophenolicus (strain ATCC 700700 / DSM 12829 / CIP 107037 / JCM 12360 / KCTC 9906 / NCIMB 13794 / A6) (Arthrobacter chlorophenolicus)).